We begin with the raw amino-acid sequence, 249 residues long: Inhibitor of growth protein 4 (249 aa).

Residues 25-118 are a coiled coil; that stretch reads FQLMRDLDQR…ADLKEKQIES (94 aa). The interval 115–160 is disordered; the sequence is QIESSDYDSSSSKGKKKGRAQKEKKAARARSKGKNSDEEAPKTAQK. The segment at 196-245 adopts a PHD-type zinc-finger fold; that stretch reads PTYCLCHQVSYGEMIGCDNPDCSIEWFHFACVGLTTKPRGKWFCPRCSQE. Residues cysteine 199, cysteine 201, cysteine 212, cysteine 217, histidine 223, cysteine 226, cysteine 239, and cysteine 242 each contribute to the Zn(2+) site.

It belongs to the ING family. In terms of assembly, homodimer. Component of the HBO1 complex.

The protein localises to the nucleus. In terms of biological role, component of HBO1 complexes, which specifically mediate acetylation of histone H3 at 'Lys-14' (H3K14ac), and have reduced activity toward histone H4. Through chromatin acetylation it may function in DNA replication. The polypeptide is Inhibitor of growth protein 4 (ING4) (Gallus gallus (Chicken)).